The chain runs to 617 residues: 1-deoxy-D-xylulose-5-phosphate synthase (617 aa).

Thiamine diphosphate contacts are provided by residues histidine 76 and 117–119 (GHS). Mg(2+) is bound at residue aspartate 148. Thiamine diphosphate contacts are provided by residues 149–150 (GA), asparagine 177, tyrosine 285, and glutamate 366. Asparagine 177 is a Mg(2+) binding site.

This sequence belongs to the transketolase family. DXPS subfamily. As to quaternary structure, homodimer. Mg(2+) is required as a cofactor. Requires thiamine diphosphate as cofactor.

It carries out the reaction D-glyceraldehyde 3-phosphate + pyruvate + H(+) = 1-deoxy-D-xylulose 5-phosphate + CO2. It functions in the pathway metabolic intermediate biosynthesis; 1-deoxy-D-xylulose 5-phosphate biosynthesis; 1-deoxy-D-xylulose 5-phosphate from D-glyceraldehyde 3-phosphate and pyruvate: step 1/1. Catalyzes the acyloin condensation reaction between C atoms 2 and 3 of pyruvate and glyceraldehyde 3-phosphate to yield 1-deoxy-D-xylulose-5-phosphate (DXP). This is 1-deoxy-D-xylulose-5-phosphate synthase from Histophilus somni (strain 2336) (Haemophilus somnus).